The chain runs to 137 residues: Basic phospholipase A2 homolog bothropstoxin-I (137 aa).

A signal peptide spans 1-16 (MRTLWIMAVLLVGVEG). Intrachain disulfides connect Cys-42-Cys-131, Cys-44-Cys-60, Cys-59-Cys-111, Cys-65-Cys-137, Cys-66-Cys-104, Cys-73-Cys-97, and Cys-91-Cys-102. The tract at residues 121 to 133 (KKYRYHLKPFCKK) is important for membrane-damaging activities in eukaryotes and bacteria; heparin-binding.

This sequence belongs to the phospholipase A2 family. Group II subfamily. K49 sub-subfamily. Homodimer; non-covalently linked (probable alternative/compact dimer conformation in solution). Binds to heparin. In terms of tissue distribution, expressed by the venom gland.

It is found in the secreted. Suramin inhibits both myotoxic and muscle-paralyzing activities. Chicoric acid inhibits myotoxic activity. Zinc ions inhibits the myotoxic activity and the neuromuscular blockade. Heparin inhibits myotoxic activity. In terms of biological role, snake venom phospholipase A2 homolog that lacks enzymatic activity. Shows local myotoxic activity. Induces inflammation, since it induces edema and leukocytes infiltration. In addition, it induces NLRP3 NLRP3, ASC (PYCARD), caspase-1 (CASP1), and IL-1beta (IL1B) gene expression in the gastrocnemius muscle, showing that it is able to activate NLRP3 inflammasome. It also damages artificial and myoblast membranes by a calcium-independent mechanism, has bactericidal activity, and induces neuromuscular blockade. A model of myotoxic mechanism has been proposed: an apo Lys49-PLA2 is activated by the entrance of a hydrophobic molecule (e.g. fatty acid) at the hydrophobic channel of the protein leading to a reorientation of a monomer. This reorientation causes a transition between 'inactive' to 'active' states, causing alignment of C-terminal and membrane-docking sites (MDoS) side-by-side and putting the membrane-disruption sites (MDiS) in the same plane, exposed to solvent and in a symmetric position for both monomers. The MDoS region stabilizes the toxin on membrane by the interaction of charged residues with phospholipid head groups. Subsequently, the MDiS region destabilizes the membrane with penetration of hydrophobic residues. This insertion causes a disorganization of the membrane, allowing an uncontrolled influx of ions (i.e. calcium and sodium), and eventually triggering irreversible intracellular alterations and cell death. In Bothrops jararacussu (Jararacussu), this protein is Basic phospholipase A2 homolog bothropstoxin-I.